We begin with the raw amino-acid sequence, 1151 residues long: MALRLVLGRAGSGKTRLCLEEIKAILAEGPAGPALIILTPEQATLQMELDLHRAAGVPGFSRVQVLSFRRLGWRVFQEAGGAARPHLGEMGKAMALRAVVSAHRDDLGLFAPLAGSPGFIEQLAHTIAELKLYRVTPADLDRILERYRETGREQTILARKLRDLALVYRELETYLAGRYLDPDDYLTLLAGRLPEAAFIRGARVWVDGFNGFTPQEEAVLQALMAVAEQVTVTLCLDPTLRHRRLGETELFHPTGETYHRLRQLALAAGVRVEDDVCLAGTPPRFREAPALAHLEAHFGRWPLRPFRGDAAGIRLVAAANRRVEVEAAAREILRLAREENLSWRQMAVLVRDLEPYHDLIVNTFRDFNIPLFIDRRRPVGHHPLVELVRAALEAVLEDWAYDPVFRYLKSDLVPVPREEIDLLENYVLAHGIRGRRWRDSRPWQYGNSRDLETPSPPGSAAGETINAIRERASCHLRRFDGALRGRQLTGREITAALFDLLQELGVPERLAAWSRQAAAAGDLDAAQEHEQIWEGLMDLLEELVLALGDTSLELEEYAAILDTGLESLKLRLIPPALDQVVAGTLDRSRQPELQAAFVLGVGEGVLPARLPEDATFSDREREELRAAGLELAPTGTLRLFHEEFLAYLALTRSRRYLWLSYPLADAEGKALSPSPLVRRLRQLLPGLREETAGTELPGGDDDLVYLTTPRQAAGHLARLLGRGRPLPPLWQEVYRWLHQDARGQKMLGLLEGGGYRNQVDPLEPELARGLYPRPLRLSISQLETFAGCPFRYFLSYGLGLQERRLYQVDPAGMGQFYHAALKLFVEELGRRGLDWGRLSDNEAAAIISQVVDSLAPALQHEILSSSARYGYLRKKLEQTLQRVMEVLNEHARRGEFRPLAVETSFGCRGKLPPLQLDAGPGRRVFLEGRVDRIDVARRQGRPYLRVIDYKSSPTTLDLTAVYYGLALQLPLYLRAALDAAPELLGEAAEPAGMLYFAVRNPLIRQRGPVGKEAAARLRRQELKMRGLLLDDVEVIKLMDREIAASPDLLPLRLNKDGSLRKGAPVAGREEMALLLDLALARAAELAGAILSGRVEISPYRRGQETACDFCPYRPVCAFDPQIPGSGYRRLGNLPGDFWQLAAAFLGSQMKG.

A UvrD-like helicase ATP-binding domain is found at 1–273 (MALRLVLGRA…LALAAGVRVE (273 aa)). 8–15 (GRAGSGKT) provides a ligand contact to ATP. The UvrD-like helicase C-terminal domain maps to 282–578 (PPRFREAPAL…KLRLIPPALD (297 aa)). Residues cysteine 788, cysteine 1107, cysteine 1110, and cysteine 1116 each contribute to the [4Fe-4S] cluster site.

This sequence belongs to the helicase family. AddB/RexB type 1 subfamily. In terms of assembly, heterodimer of AddA and AddB. It depends on Mg(2+) as a cofactor. [4Fe-4S] cluster serves as cofactor.

Its function is as follows. The heterodimer acts as both an ATP-dependent DNA helicase and an ATP-dependent, dual-direction single-stranded exonuclease. Recognizes the chi site generating a DNA molecule suitable for the initiation of homologous recombination. The AddB subunit has 5' -&gt; 3' nuclease activity but not helicase activity. The sequence is that of ATP-dependent helicase/deoxyribonuclease subunit B from Moorella thermoacetica (strain ATCC 39073 / JCM 9320).